Reading from the N-terminus, the 318-residue chain is Adenylate isopentenyltransferase 4 (318 aa).

Gly12–Ser19 contributes to the ATP binding site.

It belongs to the IPP transferase family. Requires Mg(2+) as cofactor. In terms of tissue distribution, expressed in immature seeds with highest expression in the chalazal endosperm.

It localises to the cytoplasm. It carries out the reaction dimethylallyl diphosphate + ADP = N(6)-(dimethylallyl)adenosine 5'-diphosphate + diphosphate. It catalyses the reaction dimethylallyl diphosphate + ATP = N(6)-(dimethylallyl)adenosine 5'-triphosphate + diphosphate. Its function is as follows. Involved in cytokinin biosynthesis. Catalyzes the transfer of an isopentenyl group from dimethylallyl diphosphate (DMAPP) to ATP and ADP, but not to AMP. Has no DMAPP:tRNA isopentenyltransferase activity. The polypeptide is Adenylate isopentenyltransferase 4 (IPT4) (Arabidopsis thaliana (Mouse-ear cress)).